A 165-amino-acid polypeptide reads, in one-letter code: Nucleotide-binding protein Syncc9902_1708 (165 aa).

It belongs to the YajQ family.

Nucleotide-binding protein. This chain is Nucleotide-binding protein Syncc9902_1708, found in Synechococcus sp. (strain CC9902).